The sequence spans 313 residues: Olfactory receptor 8C8 (313 aa).

The Extracellular segment spans residues 1–27; the sequence is MMQITMENKSSVSEFILMGLTDQPELQ. Asn8 carries an N-linked (GlcNAc...) asparagine glycan. A helical transmembrane segment spans residues 28–48; the sequence is LPLFVLFLMNYTATVMGNLTL. Over 49 to 59 the chain is Cytoplasmic; it reads MNLICLNSNLH. Residues 60-80 form a helical membrane-spanning segment; sequence TPMYFFLFNLSFIDFCYSMVF. The Extracellular portion of the chain corresponds to 81–96; the sequence is TPKMLMSFILEKNTIS. A helical membrane pass occupies residues 97-117; that stretch reads FGGCMAQLFFFLFFVNSESYV. Residues Cys100 and Cys192 are joined by a disulfide bond. The Cytoplasmic portion of the chain corresponds to 118 to 136; the sequence is LTAMAYDRYVAICKPLTYK. The chain crosses the membrane as a helical span at residues 137 to 157; the sequence is VIMSPKICCLLIFSSYLMGFA. Residues 158–208 lie on the Extracellular side of the membrane; that stretch reads SAMAHTGCMIRLSFCDSNIINHYMCDIFPLLPLSCSSTYVNELMSSVVVGS. A helical transmembrane segment spans residues 209–229; it reads AIILCCLIILISYAMILFNII. Topologically, residues 230 to 239 are cytoplasmic; sequence HMSSGKGWSK. A helical transmembrane segment spans residues 240–260; sequence ALGTCGSHIITVSLFYGSGLL. Topologically, residues 261–274 are extracellular; that stretch reads AYVKPSSAKTVGQG. A helical transmembrane segment spans residues 275 to 295; that stretch reads KFFSVFYTLLVPMLNPLIYSL. The Cytoplasmic portion of the chain corresponds to 296–313; the sequence is RNKDVKLAVKKTWKRITS.

Belongs to the G-protein coupled receptor 1 family. As to expression, expressed in neurons in the olfactory epithelium.

Its subcellular location is the cell membrane. In terms of biological role, potential odorant receptor. This chain is Olfactory receptor 8C8, found in Mus musculus (Mouse).